Consider the following 295-residue polypeptide: 33 kDa chaperonin (295 aa).

2 disulfides stabilise this stretch: Cys-233/Cys-235 and Cys-267/Cys-270.

It belongs to the HSP33 family. Under oxidizing conditions two disulfide bonds are formed involving the reactive cysteines. Under reducing conditions zinc is bound to the reactive cysteines and the protein is inactive.

It localises to the cytoplasm. In terms of biological role, redox regulated molecular chaperone. Protects both thermally unfolding and oxidatively damaged proteins from irreversible aggregation. Plays an important role in the bacterial defense system toward oxidative stress. This Mannheimia succiniciproducens (strain KCTC 0769BP / MBEL55E) protein is 33 kDa chaperonin.